A 144-amino-acid chain; its full sequence is Urease subunit beta (144 aa).

This sequence belongs to the urease beta subunit family. In terms of assembly, heterotrimer of UreA (gamma), UreB (beta) and UreC (alpha) subunits. Three heterotrimers associate to form the active enzyme.

It is found in the cytoplasm. The catalysed reaction is urea + 2 H2O + H(+) = hydrogencarbonate + 2 NH4(+). Its pathway is nitrogen metabolism; urea degradation; CO(2) and NH(3) from urea (urease route): step 1/1. The chain is Urease subunit beta from Yersinia pseudotuberculosis serotype O:1b (strain IP 31758).